The following is a 117-amino-acid chain: Membrane-anchored ubiquitin-fold protein 1 (117 aa).

The 67-residue stretch at 8–74 (LEIKFRLTDG…LENSKTVKDY (67 aa)) folds into the Ubiquitin-like domain. C112 is lipidated: S-palmitoyl cysteine. C114 is subject to Cysteine methyl ester. C114 carries the S-farnesyl cysteine lipid modification. The propeptide at 115–117 (SVM) is removed in mature form.

It localises to the cell membrane. May serve as docking site to facilitate the association of other proteins to the plasma membrane. The chain is Membrane-anchored ubiquitin-fold protein 1 (MUB1) from Arabidopsis thaliana (Mouse-ear cress).